Reading from the N-terminus, the 133-residue chain is Urease subunit beta (133 aa).

The segment at 106–133 is disordered; the sequence is VFRPNDSNQNAAVKNDAGEDNANKKGGK.

This sequence belongs to the urease beta subunit family. In terms of assembly, heterotrimer of UreA (gamma), UreB (beta) and UreC (alpha) subunits. Three heterotrimers associate to form the active enzyme.

It is found in the cytoplasm. The catalysed reaction is urea + 2 H2O + H(+) = hydrogencarbonate + 2 NH4(+). Its pathway is nitrogen metabolism; urea degradation; CO(2) and NH(3) from urea (urease route): step 1/1. The sequence is that of Urease subunit beta from Staphylococcus epidermidis (strain ATCC 12228 / FDA PCI 1200).